The primary structure comprises 175 residues: Large ribosomal subunit protein uL10 (175 aa).

The protein belongs to the universal ribosomal protein uL10 family. Part of the ribosomal stalk of the 50S ribosomal subunit. The N-terminus interacts with L11 and the large rRNA to form the base of the stalk. The C-terminus forms an elongated spine to which L12 dimers bind in a sequential fashion forming a multimeric L10(L12)X complex.

Its function is as follows. Forms part of the ribosomal stalk, playing a central role in the interaction of the ribosome with GTP-bound translation factors. In Picosynechococcus sp. (strain ATCC 27264 / PCC 7002 / PR-6) (Agmenellum quadruplicatum), this protein is Large ribosomal subunit protein uL10.